We begin with the raw amino-acid sequence, 359 residues long: DNA polymerase IV (359 aa).

The region spanning 4–184 is the UmuC domain; it reads IVHVDMDAFY…LKVNRIPGVG (181 aa). Mg(2+) contacts are provided by aspartate 8 and aspartate 102. Residue glutamate 103 is part of the active site.

It belongs to the DNA polymerase type-Y family. Monomer. It depends on Mg(2+) as a cofactor.

The protein resides in the cytoplasm. The enzyme catalyses DNA(n) + a 2'-deoxyribonucleoside 5'-triphosphate = DNA(n+1) + diphosphate. In terms of biological role, poorly processive, error-prone DNA polymerase involved in untargeted mutagenesis. Copies undamaged DNA at stalled replication forks, which arise in vivo from mismatched or misaligned primer ends. These misaligned primers can be extended by PolIV. Exhibits no 3'-5' exonuclease (proofreading) activity. May be involved in translesional synthesis, in conjunction with the beta clamp from PolIII. In Xanthomonas oryzae pv. oryzae (strain MAFF 311018), this protein is DNA polymerase IV.